The primary structure comprises 317 residues: Serpentine receptor class delta-47 (317 aa).

The next 7 membrane-spanning stretches (helical) occupy residues I8–V28, V42–L62, C89–I109, I128–V148, Y185–T205, A239–T259, and I270–A290.

The protein belongs to the nematode receptor-like protein srd family.

It localises to the membrane. The protein is Serpentine receptor class delta-47 (srd-47) of Caenorhabditis elegans.